The following is a 77-amino-acid chain: U8-lycotoxin-Ls1f (77 aa).

Residues 1–20 (MKLIIFTGLVLFAIVSLIEV) form the signal peptide. Positions 21-26 (QADNER) are excised as a propeptide.

It belongs to the neurotoxin 19 (CSTX) family. 08 (U8-Lctx) subfamily. In terms of processing, contains 4 disulfide bonds. Expressed by the venom gland.

It is found in the secreted. The chain is U8-lycotoxin-Ls1f from Lycosa singoriensis (Wolf spider).